The following is a 110-amino-acid chain: Phosphoribosyl-ATP pyrophosphatase (110 aa).

This sequence belongs to the PRA-PH family.

The protein localises to the cytoplasm. It catalyses the reaction 1-(5-phospho-beta-D-ribosyl)-ATP + H2O = 1-(5-phospho-beta-D-ribosyl)-5'-AMP + diphosphate + H(+). Its pathway is amino-acid biosynthesis; L-histidine biosynthesis; L-histidine from 5-phospho-alpha-D-ribose 1-diphosphate: step 2/9. This chain is Phosphoribosyl-ATP pyrophosphatase, found in Hahella chejuensis (strain KCTC 2396).